The sequence spans 205 residues: MSQLIKDPTNLGLVPVVIEQTARGERSFDIYSRLLKERVIFMIGQVEDHMANLIVAQMLFLESENPDKDIHLYINSPGGSVTAGMSIYDTMQFIKPDVSTMCIGQAASMGAFLLTAGAAGKRFALPNARVMIHQPLGGFQGQASDIEIHAKEILKIKGQLNSLLAHHTGQPIEQLEKDTDRDNFMSADEAKEYGIIDAVLSQRPV.

Ser108 (nucleophile) is an active-site residue. Residue His133 is part of the active site.

The protein belongs to the peptidase S14 family. As to quaternary structure, fourteen ClpP subunits assemble into 2 heptameric rings which stack back to back to give a disk-like structure with a central cavity, resembling the structure of eukaryotic proteasomes.

The protein localises to the cytoplasm. The enzyme catalyses Hydrolysis of proteins to small peptides in the presence of ATP and magnesium. alpha-casein is the usual test substrate. In the absence of ATP, only oligopeptides shorter than five residues are hydrolyzed (such as succinyl-Leu-Tyr-|-NHMec, and Leu-Tyr-Leu-|-Tyr-Trp, in which cleavage of the -Tyr-|-Leu- and -Tyr-|-Trp bonds also occurs).. In terms of biological role, cleaves peptides in various proteins in a process that requires ATP hydrolysis. Has a chymotrypsin-like activity. Plays a major role in the degradation of misfolded proteins. The polypeptide is ATP-dependent Clp protease proteolytic subunit (Alcanivorax borkumensis (strain ATCC 700651 / DSM 11573 / NCIMB 13689 / SK2)).